Consider the following 415-residue polypeptide: Esterase FrsA (415 aa).

It belongs to the FrsA family.

The enzyme catalyses a carboxylic ester + H2O = an alcohol + a carboxylate + H(+). Functionally, catalyzes the hydrolysis of esters. The protein is Esterase FrsA of Yersinia pseudotuberculosis serotype O:1b (strain IP 31758).